A 521-amino-acid polypeptide reads, in one-letter code: MFLTDGSSLNSLTMTRRMMVGKRVRTRFAPSPTGYLHVGGLRTALYNYLFAKRMDGDFVVRIEDTDQSRKVADAQENLIKTLEWAGLMPDESPLHGGDFGPYLQSERLDIYKKYCEQLLEAGHAYHCFATSEELEENRQLQLKQGLQPKYNRKWLPEDMGGSMPRSEIQKKLDEGVPSVVRMKVPDYVSVWFEDIIRGPIEFDSATIDDQVLMKSDGFPTYHFASVIDDHLMEFTHIIRGEEWLPSMPKHLLLYEFLGWEPPKYAHLPLLLNPDRSKLSKRQGDVSVEDYIRKGYSGEAIVNFVALLGWNQGEGCEQEVYSLQELTERFSLERVGKAGSIFTIDKLNWLEKQYIKNRPAEDIIRVIKPLLLSELEKKETLLDPATITGERYLEDVIELMRERVGFEREFVTFSSYFFFEPETYEEDAVKKRWTPDTNSLLDEFLPVLESMPDFTAEAIEAALKEFVAPKGLKAAALIHPLRIVSSGVSFGPSLYHMLEVLGREAVVRRIRKGMAVITLPQQ.

Residues 30–40 (PSPTGYLHVGG) carry the 'HIGH' region motif. The 'KMSKS' region signature appears at 277–281 (KLSKR). Lysine 280 contributes to the ATP binding site.

This sequence belongs to the class-I aminoacyl-tRNA synthetase family. Glutamate--tRNA ligase type 1 subfamily. As to quaternary structure, monomer.

Its subcellular location is the cytoplasm. It catalyses the reaction tRNA(Glu) + L-glutamate + ATP = L-glutamyl-tRNA(Glu) + AMP + diphosphate. Catalyzes the attachment of glutamate to tRNA(Glu) in a two-step reaction: glutamate is first activated by ATP to form Glu-AMP and then transferred to the acceptor end of tRNA(Glu). The polypeptide is Glutamate--tRNA ligase (Chlorobium phaeovibrioides (strain DSM 265 / 1930) (Prosthecochloris vibrioformis (strain DSM 265))).